Consider the following 97-residue polypeptide: Eotaxin (97 aa).

An N-terminal signal peptide occupies residues 1 to 23 (MQLSTALLFLLLTATSFTSQVLA). Intrachain disulfides connect Cys-32/Cys-57 and Cys-33/Cys-73. Thr-94 is a glycosylation site (O-linked (GalNAc...) threonine).

This sequence belongs to the intercrine beta (chemokine CC) family.

The protein resides in the secreted. In terms of biological role, in response to the presence of allergens, this protein directly promotes the accumulation of eosinophils (a prominent feature of allergic inflammatory reactions), but not lymphocytes, macrophages or neutrophils. Binds to CCR3. This chain is Eotaxin (Ccl11), found in Rattus norvegicus (Rat).